A 44-amino-acid chain; its full sequence is pyr operon leader peptide (44 aa).

The polypeptide is pyr operon leader peptide (pyrL) (Escherichia coli O157:H7).